We begin with the raw amino-acid sequence, 196 residues long: uncharacterized protein (196 aa).

Residues 1–10 (MPGMVPPHVP) show a composition bias toward pro residues. Disordered stretches follow at residues 1–118 (MPGM…EGSG) and 176–196 (TEQA…SAPG). The segment covering 25–45 (PVAPQVPSPGGAPGQGPYPYS) has biased composition (low complexity). Residues 54–69 (LDTSGKNLTEQNSYSN) are compositionally biased toward polar residues.

This is an uncharacterized protein from Homo sapiens (Human).